The following is a 471-amino-acid chain: Rho GTPase-activating protein 15 (471 aa).

Residues 1–20 (MQKSTNSDIPVETLNPTRQG) form a disordered region. The residue at position 43 (Ser43) is a Phosphoserine. The PH domain occupies 79–189 (MVEKEGYLQK…WFHAIKNAID (111 aa)). Residues Ser196, Ser199, and Ser243 each carry the phosphoserine modification. The 190-residue stretch at 281–470 (SHLHTLCERE…LMLSAYDQIF (190 aa)) folds into the Rho-GAP domain.

It localises to the cytoplasm. It is found in the membrane. Functionally, GTPase activator for the Rho-type GTPases by converting them to an inactive GDP-bound state. Has activity toward RAC1. Overexpression results in an increase in actin stress fibers and cell contraction. The sequence is that of Rho GTPase-activating protein 15 (ARHGAP15) from Bos taurus (Bovine).